Here is a 157-residue protein sequence, read N- to C-terminus: Protein Smg (157 aa).

The protein belongs to the Smg family.

The protein is Protein Smg of Salmonella agona (strain SL483).